We begin with the raw amino-acid sequence, 227 residues long: NAD(P)H-quinone oxidoreductase subunit K, chloroplastic (227 aa).

The [4Fe-4S] cluster site is built by cysteine 43, cysteine 44, cysteine 108, and cysteine 139.

It belongs to the complex I 20 kDa subunit family. In terms of assembly, NDH is composed of at least 16 different subunits, 5 of which are encoded in the nucleus. [4Fe-4S] cluster is required as a cofactor.

Its subcellular location is the plastid. It localises to the chloroplast thylakoid membrane. It carries out the reaction a plastoquinone + NADH + (n+1) H(+)(in) = a plastoquinol + NAD(+) + n H(+)(out). It catalyses the reaction a plastoquinone + NADPH + (n+1) H(+)(in) = a plastoquinol + NADP(+) + n H(+)(out). In terms of biological role, NDH shuttles electrons from NAD(P)H:plastoquinone, via FMN and iron-sulfur (Fe-S) centers, to quinones in the photosynthetic chain and possibly in a chloroplast respiratory chain. The immediate electron acceptor for the enzyme in this species is believed to be plastoquinone. Couples the redox reaction to proton translocation, and thus conserves the redox energy in a proton gradient. This is NAD(P)H-quinone oxidoreductase subunit K, chloroplastic from Ranunculus macranthus (Large buttercup).